The following is a 678-amino-acid chain: Growth arrest-specific protein 6 (678 aa).

The N-terminal stretch at 1–30 is a signal peptide; the sequence is MAPSLSPGPAALRRAPQLLLLLLAAECALA. The 42-residue stretch at 53-94 folds into the Gla domain; it reads FEEAKQGHLERECVEELCSREEAREVFENDPETDYFYPRYLD. An intrachain disulfide couples Cys-65 to Cys-70. At Ser-71 the chain carries Phosphoserine; by FAM20C. An EGF-like 1; calcium-binding domain is found at 116–154; the sequence is LPDQCTPNPCDRKGTQACQDLMGNFFCLCKAGWGGRLCD. Cystine bridges form between Cys-120–Cys-133, Cys-125–Cys-142, Cys-144–Cys-153, Cys-160–Cys-171, Cys-167–Cys-180, Cys-182–Cys-195, Cys-201–Cys-212, Cys-207–Cys-221, Cys-223–Cys-236, Cys-242–Cys-251, Cys-247–Cys-260, Cys-262–Cys-277, Cys-283–Cys-570, and Cys-444–Cys-470. In terms of domain architecture, EGF-like 2; calcium-binding spans 156 to 196; that stretch reads DVNECSQENGGCLQICHNKPGSFHCSCHSGFELSSDGRTCQ. An EGF-like 3; calcium-binding domain is found at 197-237; that stretch reads DIDECADSEACGEARCKNLPGSYSCLCDEGFAYSSQEKACR. The 41-residue stretch at 238 to 278 folds into the EGF-like 4; calcium-binding domain; that stretch reads DVDECLQGRCEQVCVNSPGSYTCHCDGRGGLKLSQDMDTCE. Laminin G-like domains follow at residues 298–470 and 477–670; these read GRMF…RMQC and GSFY…AHSC. Ca(2+) contacts are provided by Asp-329 and Glu-331. Asn-420 carries an N-linked (GlcNAc...) asparagine glycan. Arg-440 contributes to the Ca(2+) binding site. A phosphothreonine mark is found at Thr-621 and Thr-637. Tyr-640 carries the phosphotyrosine modification. The cysteines at positions 643 and 670 are disulfide-linked. Residue Asp-656 participates in Ca(2+) binding.

Heterodimer and heterotetramer with AXL. Proteolytically processed after secretion to yield a N-terminal 36 kDa protein and a C-terminal 50 kDa protein including the laminin G-like domains which activates AXL. Post-translationally, gamma-carboxyglutamate residues are formed by vitamin K dependent carboxylation. These residues are essential for the binding of calcium. Plasma. Isoform 1 and isoform 2 are widely expressed, isoform 1 being expressed at higher levels than isoform 2 in most tissues. Isoform 2 is the predominant form in spleen.

It is found in the secreted. Functionally, ligand for tyrosine-protein kinase receptors AXL, TYRO3 and MER whose signaling is implicated in cell growth and survival, cell adhesion and cell migration. GAS6/AXL signaling plays a role in various processes such as endothelial cell survival during acidification by preventing apoptosis, optimal cytokine signaling during human natural killer cell development, hepatic regeneration, gonadotropin-releasing hormone neuron survival and migration, platelet activation, or regulation of thrombotic responses. (Microbial infection) Can bridge virus envelope phosphatidylserine to the TAM receptor tyrosine kinase Axl to mediate viral entry by apoptotic mimicry. Plays a role in Dengue cell entry by apoptotic mimicry. Plays a role in Vaccinia virus cell entry by apoptotic mimicry. Plays a role in ebolavirus and marburgvirus cell entry by apoptotic mimicry. The polypeptide is Growth arrest-specific protein 6 (Homo sapiens (Human)).